Consider the following 1129-residue polypeptide: Ubiquitin carboxyl-terminal hydrolase 7 (1129 aa).

Residues 29-169 form the MATH domain; that stretch reads EGHLALDIER…DDVIRLRCRF (141 aa). Residues 190–500 enclose the USP domain; the sequence is IGLRNQGATC…SAYMLVYVRD (311 aa). C199 functions as the Nucleophile in the catalytic mechanism. The Proton acceptor role is filled by H439.

It belongs to the peptidase C19 family.

It localises to the nucleus. The enzyme catalyses Thiol-dependent hydrolysis of ester, thioester, amide, peptide and isopeptide bonds formed by the C-terminal Gly of ubiquitin (a 76-residue protein attached to proteins as an intracellular targeting signal).. Functionally, hydrolase that deubiquitinates target proteins. This is Ubiquitin carboxyl-terminal hydrolase 7 from Caenorhabditis briggsae.